We begin with the raw amino-acid sequence, 64 residues long: Large ribosomal subunit protein bL35 (64 aa).

Residues 1-20 (MKQKTHKGTAKRIKVTGSGK) are disordered.

The protein belongs to the bacterial ribosomal protein bL35 family.

The sequence is that of Large ribosomal subunit protein bL35 from Corynebacterium urealyticum (strain ATCC 43042 / DSM 7109).